Reading from the N-terminus, the 793-residue chain is Probable phosphoketolase (793 aa).

This sequence belongs to the XFP family. It depends on thiamine diphosphate as a cofactor.

This Rhodopirellula baltica (strain DSM 10527 / NCIMB 13988 / SH1) protein is Probable phosphoketolase.